The following is a 127-amino-acid chain: Small ribosomal subunit protein bS6 (127 aa).

Belongs to the bacterial ribosomal protein bS6 family.

Functionally, binds together with bS18 to 16S ribosomal RNA. This chain is Small ribosomal subunit protein bS6, found in Acinetobacter baumannii (strain AB0057).